Reading from the N-terminus, the 261-residue chain is Carnitinyl-CoA dehydratase (261 aa).

The Nucleophile role is filled by glutamate 111. Glutamate 131 (proton acceptor) is an active-site residue.

This sequence belongs to the enoyl-CoA hydratase/isomerase family.

It catalyses the reaction (R)-carnitinyl-CoA = crotonobetainyl-CoA + H2O. It functions in the pathway amine and polyamine metabolism; carnitine metabolism. Its function is as follows. Catalyzes the reversible dehydration of L-carnitinyl-CoA to crotonobetainyl-CoA. The polypeptide is Carnitinyl-CoA dehydratase (Salmonella paratyphi C (strain RKS4594)).